A 130-amino-acid polypeptide reads, in one-letter code: Small ribosomal subunit protein uS8 (130 aa).

Belongs to the universal ribosomal protein uS8 family. Part of the 30S ribosomal subunit. Contacts proteins S5 and S12.

One of the primary rRNA binding proteins, it binds directly to 16S rRNA central domain where it helps coordinate assembly of the platform of the 30S subunit. This Psychromonas ingrahamii (strain DSM 17664 / CCUG 51855 / 37) protein is Small ribosomal subunit protein uS8.